Here is a 318-residue protein sequence, read N- to C-terminus: Ribose-phosphate pyrophosphokinase 1 (318 aa).

Residue 96 to 101 coordinates ATP; that stretch reads RQDKKD. Residues Asp-128, His-130, Asp-139, and Asp-143 each contribute to the Mg(2+) site. Residue His-130 coordinates ATP. Positions 212-227 are binding of phosphoribosylpyrophosphate; it reads KDRVAILVDDMADTCG.

It belongs to the ribose-phosphate pyrophosphokinase family. As to quaternary structure, homodimer. The active form is probably a hexamer composed of 3 homodimers. Requires Mg(2+) as cofactor.

It catalyses the reaction D-ribose 5-phosphate + ATP = 5-phospho-alpha-D-ribose 1-diphosphate + AMP + H(+). It participates in metabolic intermediate biosynthesis; 5-phospho-alpha-D-ribose 1-diphosphate biosynthesis; 5-phospho-alpha-D-ribose 1-diphosphate from D-ribose 5-phosphate (route I): step 1/1. Its activity is regulated as follows. Activated by magnesium and inorganic phosphate. Catalyzes the synthesis of phosphoribosylpyrophosphate (PRPP) that is essential for nucleotide synthesis. The chain is Ribose-phosphate pyrophosphokinase 1 (PRPS1) from Bos taurus (Bovine).